Consider the following 339-residue polypeptide: Probable N5-carboxyaminoimidazole ribonucleotide mutase (339 aa).

Substrate is bound by residues Ser-11, Asp-14, and Arg-41.

The protein belongs to the AIR carboxylase family. Class I subfamily.

It carries out the reaction 5-carboxyamino-1-(5-phospho-D-ribosyl)imidazole + H(+) = 5-amino-1-(5-phospho-D-ribosyl)imidazole-4-carboxylate. The protein operates within purine metabolism; IMP biosynthesis via de novo pathway; 5-amino-1-(5-phospho-D-ribosyl)imidazole-4-carboxylate from 5-amino-1-(5-phospho-D-ribosyl)imidazole (N5-CAIR route): step 2/2. Its function is as follows. Catalyzes the conversion of N5-carboxyaminoimidazole ribonucleotide (N5-CAIR) to 4-carboxy-5-aminoimidazole ribonucleotide (CAIR). This Methanobrevibacter smithii protein is Probable N5-carboxyaminoimidazole ribonucleotide mutase.